A 248-amino-acid polypeptide reads, in one-letter code: 4-hydroxy-tetrahydrodipicolinate reductase (248 aa).

Residues aspartate 32, 74–76, and 99–102 contribute to the NAD(+) site; these read GTT and SANF. Histidine 134 functions as the Proton donor/acceptor in the catalytic mechanism. Histidine 135 is a binding site for (S)-2,3,4,5-tetrahydrodipicolinate. Catalysis depends on lysine 138, which acts as the Proton donor. Position 144–145 (144–145) interacts with (S)-2,3,4,5-tetrahydrodipicolinate; that stretch reads GT.

Belongs to the DapB family.

Its subcellular location is the cytoplasm. The catalysed reaction is (S)-2,3,4,5-tetrahydrodipicolinate + NAD(+) + H2O = (2S,4S)-4-hydroxy-2,3,4,5-tetrahydrodipicolinate + NADH + H(+). It carries out the reaction (S)-2,3,4,5-tetrahydrodipicolinate + NADP(+) + H2O = (2S,4S)-4-hydroxy-2,3,4,5-tetrahydrodipicolinate + NADPH + H(+). It participates in amino-acid biosynthesis; L-lysine biosynthesis via DAP pathway; (S)-tetrahydrodipicolinate from L-aspartate: step 4/4. Functionally, catalyzes the conversion of 4-hydroxy-tetrahydrodipicolinate (HTPA) to tetrahydrodipicolinate. This is 4-hydroxy-tetrahydrodipicolinate reductase from Chlorobium luteolum (strain DSM 273 / BCRC 81028 / 2530) (Pelodictyon luteolum).